The chain runs to 385 residues: Rhomboid domain-containing protein 3 (385 aa).

5 helical membrane passes run 13-33 (ALPLASSVLMLLLSCLWLLGA), 58-78 (LGHTALPGLLLSLLLLPTLGW), 93-113 (SAVLALATGLLAVLLAGLGLS), 146-166 (WLLPWLLLALTLLLSSEPPFL), and 168-188 (LLCGLLAGLAYAAGAFRWLEL). The 40-residue stretch at 322–361 (SVSSLRLQQLQHMGFPTEQAAVALAATGRVEGAVSLLVEG) folds into the UBA domain.

It localises to the membrane. This is Rhomboid domain-containing protein 3 (Rhbdd3) from Rattus norvegicus (Rat).